A 465-amino-acid chain; its full sequence is MTHTTTIAAIATPVGRGGVGIIRLSGPKAYAIACALTGKESFTPRLASFCRFYDANNNVLDEGLVLYFKAPHSFTGEDVIELQGHGGMILQNQLLARVFELGAHQAQAGEFSYRAFDNDKLDLLQAEAIADAIDATSAAAASSAIRSLTGAFSNKINEVLEALIELRLYVEASIDFPDEEDVDFLSDGVIEGKLQRIQQQLTTILSTAQQGQLLRDGVHVVLAGRPNAGKSSLLNSLAGQERAIVTDVAGTTRDTLQETIVLNGLTIHLTDTAGLRDTTDAVERIGIERARTAINQADLLLLVYDLSQEVDPLKLASELFGEGIDGTPNFDPSKLLLIGNKRDLVEDKGESANKLADKADILGYEQVNVSCETSQGIPQLIASLCDKVGFHPPENSLIARTRHLDALRRTQQHVDEAHQQLVIYQAGELVAESLRQGQYSLGEITGEFSADDLLGRIFGSFCIGK.

Positions 23, 81, and 120 each coordinate (6S)-5-formyl-5,6,7,8-tetrahydrofolate. The TrmE-type G domain maps to 217–389; the sequence is GVHVVLAGRP…LIASLCDKVG (173 aa). Asn-227 provides a ligand contact to K(+). Residues 227–232, 246–252, and 271–274 contribute to the GTP site; these read NAGKSS, TDVAGTT, and DTAG. Ser-231 is a binding site for Mg(2+). K(+)-binding residues include Thr-246, Val-248, and Thr-251. Thr-252 contributes to the Mg(2+) binding site. (6S)-5-formyl-5,6,7,8-tetrahydrofolate is bound at residue Lys-465.

The protein belongs to the TRAFAC class TrmE-Era-EngA-EngB-Septin-like GTPase superfamily. TrmE GTPase family. As to quaternary structure, homodimer. Heterotetramer of two MnmE and two MnmG subunits. It depends on K(+) as a cofactor.

The protein resides in the cytoplasm. Its function is as follows. Exhibits a very high intrinsic GTPase hydrolysis rate. Involved in the addition of a carboxymethylaminomethyl (cmnm) group at the wobble position (U34) of certain tRNAs, forming tRNA-cmnm(5)s(2)U34. This Psychrobacter sp. (strain PRwf-1) protein is tRNA modification GTPase MnmE.